A 142-amino-acid chain; its full sequence is Large ribosomal subunit protein uL11 (142 aa).

This sequence belongs to the universal ribosomal protein uL11 family. Part of the ribosomal stalk of the 50S ribosomal subunit. Interacts with L10 and the large rRNA to form the base of the stalk. L10 forms an elongated spine to which L12 dimers bind in a sequential fashion forming a multimeric L10(L12)X complex. One or more lysine residues are methylated.

Forms part of the ribosomal stalk which helps the ribosome interact with GTP-bound translation factors. The chain is Large ribosomal subunit protein uL11 from Bartonella henselae (strain ATCC 49882 / DSM 28221 / CCUG 30454 / Houston 1) (Rochalimaea henselae).